The chain runs to 222 residues: Ribonuclease 3 (222 aa).

The 123-residue stretch at 5–127 folds into the RNase III domain; it reads PIKLEKKLKL…LIGAIYLDKG (123 aa). Glu-41 is a binding site for Mg(2+). Asp-45 is a catalytic residue. Mg(2+)-binding residues include Asp-113 and Glu-116. Glu-116 is a catalytic residue. Residues 152–221 enclose the DRBM domain; that stretch reads DAKTKLQEYS…ASLCLQDIFK (70 aa).

The protein belongs to the ribonuclease III family. In terms of assembly, homodimer. The cofactor is Mg(2+).

It localises to the cytoplasm. It catalyses the reaction Endonucleolytic cleavage to 5'-phosphomonoester.. In terms of biological role, digests double-stranded RNA. Involved in the processing of primary rRNA transcript to yield the immediate precursors to the large and small rRNAs (23S and 16S). Processes some mRNAs, and tRNAs when they are encoded in the rRNA operon. Processes pre-crRNA and tracrRNA of type II CRISPR loci if present in the organism. In Pelagibacter ubique (strain HTCC1062), this protein is Ribonuclease 3.